The sequence spans 304 residues: Non-specific ribonucleoside hydrolase RihC (304 aa).

Residue histidine 233 is part of the active site.

It belongs to the IUNH family. RihC subfamily.

Hydrolyzes both purine and pyrimidine ribonucleosides with a broad-substrate specificity. This Escherichia coli O8 (strain IAI1) protein is Non-specific ribonucleoside hydrolase RihC.